Consider the following 232-residue polypeptide: Imidazole glycerol phosphate synthase subunit HisF (232 aa).

Catalysis depends on residues D11 and D130.

This sequence belongs to the HisA/HisF family. In terms of assembly, heterodimer of HisH and HisF.

It is found in the cytoplasm. The catalysed reaction is 5-[(5-phospho-1-deoxy-D-ribulos-1-ylimino)methylamino]-1-(5-phospho-beta-D-ribosyl)imidazole-4-carboxamide + L-glutamine = D-erythro-1-(imidazol-4-yl)glycerol 3-phosphate + 5-amino-1-(5-phospho-beta-D-ribosyl)imidazole-4-carboxamide + L-glutamate + H(+). The protein operates within amino-acid biosynthesis; L-histidine biosynthesis; L-histidine from 5-phospho-alpha-D-ribose 1-diphosphate: step 5/9. In terms of biological role, IGPS catalyzes the conversion of PRFAR and glutamine to IGP, AICAR and glutamate. The HisF subunit catalyzes the cyclization activity that produces IGP and AICAR from PRFAR using the ammonia provided by the HisH subunit. This is Imidazole glycerol phosphate synthase subunit HisF from Listeria monocytogenes serotype 4a (strain HCC23).